The following is a 108-amino-acid chain: UPF0145 protein YjfJ (108 aa).

It belongs to the UPF0145 family.

This chain is UPF0145 protein YjfJ (yjfJ), found in Lactococcus lactis subsp. lactis (strain IL1403) (Streptococcus lactis).